Reading from the N-terminus, the 145-residue chain is LIM domain only protein 3 (145 aa).

LIM zinc-binding domains follow at residues 11-73 (KGCA…LFGT) and 75-137 (GNCA…GLMK).

The chain is LIM domain only protein 3 (Lmo3) from Rattus norvegicus (Rat).